A 1006-amino-acid chain; its full sequence is Probable sulfite reductase [NADPH] flavoprotein component (1006 aa).

An FAD-binding FR-type domain is found at glutamate 622 to proline 852. FAD-binding positions include tyrosine 658 to valine 669 and isoleucine 788 to serine 798.

The cofactor is FAD. It depends on FMN as a cofactor.

It carries out the reaction hydrogen sulfide + 3 NADP(+) + 3 H2O = sulfite + 3 NADPH + 4 H(+). It functions in the pathway sulfur metabolism; hydrogen sulfide biosynthesis; hydrogen sulfide from sulfite (NADPH route): step 1/1. Its function is as follows. This enzyme catalyzes the 6-electron reduction of sulfite to sulfide. This is one of several activities required for the biosynthesis of L-cysteine from sulfate. The protein is Probable sulfite reductase [NADPH] flavoprotein component of Schizosaccharomyces pombe (strain 972 / ATCC 24843) (Fission yeast).